The chain runs to 511 residues: Glutamate/gamma-aminobutyrate antiporter (511 aa).

At 1–13 (MATSVQTGKAKQL) the chain is on the cytoplasmic side. Residues 14-36 (TLLGFFAITASMVMAVYEYPTFA) form a helical membrane-spanning segment. The Periplasmic segment spans residues 37-40 (TSGF). A helical transmembrane segment spans residues 41-64 (SLVFFLLLGGILWFIPVGLCAAEM). Residues 65 to 85 (ATVDGWEEGGVFAWVSNTLGP) are Cytoplasmic-facing. Residues 86 to 112 (RWGFAAISFGYLQIAIGFIPMLYFVLG) traverse the membrane as a helical segment. Topologically, residues 113-126 (ALSYILKWPALNED) are periplasmic. Residues 127-147 (PITKTIAALIILWALALTQFG) form a helical membrane-spanning segment. The Cytoplasmic segment spans residues 148–151 (GTKY). Residues 152–180 (TARIAKVGFFAGILLPAFILIALAAIYLH) traverse the membrane as a helical segment. Residues 181–201 (SGAPVAIEMDSKTFFPDFSKV) are Periplasmic-facing. A helical membrane pass occupies residues 202-225 (GTLVVFVAFILSYMGVEASATHVN). Residues 226–229 (EMSN) lie on the Cytoplasmic side of the membrane. Residues 230–259 (PGRDYPLAMLLLMVAAICLSSVGGLSIAMV) form a helical membrane-spanning segment. Over 260–288 (IPGNEINLSAGVMQTFTVLMSHVAPEIEW) the chain is Periplasmic. The helical transmembrane segment at 289-322 (TVRVISALLLLGVLAEIASWIVGPSRGMYVTAQK) threads the bilayer. At 323-337 (NLLPAAFAKMNKNGV) the chain is on the cytoplasmic side. The helical transmembrane segment at 338-359 (PVTLVISQLVITSIALIILTNT) threads the bilayer. At 360–362 (GGG) the chain is on the periplasmic side. The helical transmembrane segment at 363–396 (NNMSFLIALALTVVIYLCAYFMLFIGYIVLVLKH) threads the bilayer. Topologically, residues 397–409 (PDLKRTFNIPGGK) are cytoplasmic. The chain crosses the membrane as a helical span at residues 410–430 (GVKLVVAIVGLLTSIMAFIVS). The Periplasmic portion of the chain corresponds to 431–443 (FLPPDNIQGDSTD). The chain crosses the membrane as a helical span at residues 444-467 (MYVELLVVSFLVVLALPFILYAVH). The Cytoplasmic segment spans residues 468-511 (DRKGKANTGVTLEPINSQNAPKGHFFLHPRARSPHYIVMNDKKH).

It belongs to the amino acid-polyamine-organocation (APC) superfamily. Glutamate:GABA antiporter (GGA) (TC 2.A.3.7) family. Monomer.

The protein localises to the cell inner membrane. It catalyses the reaction 4-aminobutanoate(in) + L-glutamate(out) = 4-aminobutanoate(out) + L-glutamate(in). With respect to regulation, shows pH-dependent activity. The Glu/GABA transport activity is robust at pH 4.5 and rapidly decreases with increasing pH, with no detectable activity at pH 6.5 or above. The Glu analog L-trans-pyrrolidine-2,4-dicarboxylic acid (L-PDC) blocks the uptake of glutamate by selective inhibition. In terms of biological role, involved in glutaminase-dependent acid resistance. Exchanges extracellular glutamate (Glu) for intracellular gamma-aminobutyric acid (GABA) under acidic conditions. The protonation states of substrates are crucial for transport. Selectively transports Glu with no net charge and GABA with a positive charge. Also efficiently transports glutamine and, to a smaller extent, methionine and leucine. When the extracellular pH drops below 2.5, can import L-glutamine and export either glutamate or GABA. The ability to survive the extremely acidic conditions of the stomach is essential for successful colonization of the host by commensal and pathogenic bacteria. This chain is Glutamate/gamma-aminobutyrate antiporter, found in Escherichia coli (strain K12).